The chain runs to 389 residues: E3 ubiquitin-protein ligase E3D (389 aa).

Alanine 2 is modified (N-acetylalanine). Residues 129–159 (PLPSENWGALVGEWCCHPDPFANKSLHPQEN) carry the BRAT1-like motif motif. Cysteine 144 serves as a coordination point for Zn(2+). Residues 235 to 257 (QSSERSFPIIPRSWFVQSVIAQC) form an interaction with UBE2C region. Residues 353–389 (LPSATCLELLLILSKSNANLPSSLRRVNSFQVAFLKM) form an HECT-like region.

In terms of assembly, interacts with UBE2C/UbcH10 (E2 ubiquitin-conjugating enzyme). In vitro, interacts with cyclin-B. Ubiquitinated by UBCH10 (E2 ubiquitin-conjugating enzyme).

It is found in the cytoplasm. It catalyses the reaction S-ubiquitinyl-[E2 ubiquitin-conjugating enzyme]-L-cysteine + [acceptor protein]-L-lysine = [E2 ubiquitin-conjugating enzyme]-L-cysteine + N(6)-ubiquitinyl-[acceptor protein]-L-lysine.. It functions in the pathway protein modification; protein ubiquitination. Its function is as follows. E3 ubiquitin-protein ligase which accepts ubiquitin from specific E2 ubiquitin-conjugating enzymes, and transfers it to substrates, generally promoting their degradation by the proteasome. Independently of its E3 ubiquitin-protein ligase activity, acts as an inhibitor of CPSF3 endonuclease activity by blocking CPSF3 active site. This Homo sapiens (Human) protein is E3 ubiquitin-protein ligase E3D (UBE3D).